We begin with the raw amino-acid sequence, 371 residues long: MNQSYITIFFRTLFVISMTAGSIAAAYYSFPLTYPFLIALILSSVIHPVVDYLDKVTGFPRTINVLGVLAFFLLAAFGVLTILVAEIVTGTAYLAKTLPPHISTFISYCEKLFTTHIQPLYNELTLLFQELETNQQASIVTHIQTLGDSAAKNAGLLLSHILEMIPRFFALLPNTAAVLIFSLLATFFMTKDWHKLKAMLVLILPDRVTANSKAISSELKKAMTGFIKAQAVLVFITMVIVFIGLSLLKVEHAATIAFLIGLVDLLPYLGAGSVFVPWILYLSITGQLPQAIGIGILYLVVLIQRQLTEPKILSKSIGIDPLATLIALFAGFKLFGFLGLIAGPAVLVIIQAFITTGALKEIWSYITVQQK.

A run of 9 helical transmembrane segments spans residues 6-26 (ITIFFRTLFVISMTAGSIAAA), 30-50 (FPLTYPFLIALILSSVIHPVV), 65-85 (VLGVLAFFLLAAFGVLTILVA), 168-188 (FFALLPNTAAVLIFSLLATFF), 225-245 (GFIKAQAVLVFITMVIVFIGL), 256-276 (IAFLIGLVDLLPYLGAGSVFV), 283-303 (SITGQLPQAIGIGILYLVVLI), 312-332 (ILSKSIGIDPLATLIALFAGF), and 334-354 (LFGFLGLIAGPAVLVIIQAFI).

The protein belongs to the autoinducer-2 exporter (AI-2E) (TC 2.A.86) family.

The protein localises to the cell membrane. In Bacillus subtilis (strain 168), this protein is Putative transport protein YtvI (ytvI).